A 143-amino-acid chain; its full sequence is Probable glycine cleavage system H protein (143 aa).

Positions 36-118 constitute a Lipoyl-binding domain; the sequence is VATVGITDFA…YGEGWIFKIK (83 aa). Residue Lys77 is modified to N6-lipoyllysine.

Belongs to the GcvH family. As to quaternary structure, the glycine cleavage system is composed of four proteins: P, T, L and H. The cofactor is (R)-lipoate.

The glycine cleavage system catalyzes the degradation of glycine. The H protein shuttles the methylamine group of glycine from the P protein to the T protein. The chain is Probable glycine cleavage system H protein from Aeropyrum pernix (strain ATCC 700893 / DSM 11879 / JCM 9820 / NBRC 100138 / K1).